Here is a 536-residue protein sequence, read N- to C-terminus: Berberine bridge enzyme-like 2 (536 aa).

A signal peptide spans 1-20; the sequence is MKIFCLILFLISSFISTSLA. The cysteines at positions 35 and 98 are disulfide-linked. Residues asparagine 38, asparagine 73, asparagine 136, asparagine 266, asparagine 334, and asparagine 352 are each glycosylated (N-linked (GlcNAc...) asparagine). The 175-residue stretch at 76 to 250 folds into the FAD-binding PCMH-type domain; it reads ATPKPAIVIA…LAFKIKLVPV (175 aa). The segment at residues 113-175 is a cross-link (6-(S-cysteinyl)-8alpha-(pros-histidyl)-FAD (His-Cys)); the sequence is HDYEGVSYIS…KSHGFPAGVC (63 aa).

It belongs to the oxygen-dependent FAD-linked oxidoreductase family. FAD is required as a cofactor. In terms of processing, the FAD cofactor is bound via a bicovalent 6-S-cysteinyl, 8alpha-N1-histidyl FAD linkage.

The protein resides in the secreted. Its subcellular location is the cell wall. The chain is Berberine bridge enzyme-like 2 from Arabidopsis thaliana (Mouse-ear cress).